Reading from the N-terminus, the 306-residue chain is tRNA pseudouridine synthase B (306 aa).

Aspartate 48 functions as the Nucleophile in the catalytic mechanism.

This sequence belongs to the pseudouridine synthase TruB family. Type 1 subfamily.

It catalyses the reaction uridine(55) in tRNA = pseudouridine(55) in tRNA. Its function is as follows. Responsible for synthesis of pseudouridine from uracil-55 in the psi GC loop of transfer RNAs. The protein is tRNA pseudouridine synthase B of Haemophilus influenzae (strain 86-028NP).